The chain runs to 181 residues: ATP synthase subunit delta (181 aa).

This sequence belongs to the ATPase delta chain family. In terms of assembly, F-type ATPases have 2 components, F(1) - the catalytic core - and F(0) - the membrane proton channel. F(1) has five subunits: alpha(3), beta(3), gamma(1), delta(1), epsilon(1). F(0) has three main subunits: a(1), b(2) and c(10-14). The alpha and beta chains form an alternating ring which encloses part of the gamma chain. F(1) is attached to F(0) by a central stalk formed by the gamma and epsilon chains, while a peripheral stalk is formed by the delta and b chains.

Its subcellular location is the cell inner membrane. Functionally, f(1)F(0) ATP synthase produces ATP from ADP in the presence of a proton or sodium gradient. F-type ATPases consist of two structural domains, F(1) containing the extramembraneous catalytic core and F(0) containing the membrane proton channel, linked together by a central stalk and a peripheral stalk. During catalysis, ATP synthesis in the catalytic domain of F(1) is coupled via a rotary mechanism of the central stalk subunits to proton translocation. Its function is as follows. This protein is part of the stalk that links CF(0) to CF(1). It either transmits conformational changes from CF(0) to CF(1) or is implicated in proton conduction. This Chlorobium phaeobacteroides (strain DSM 266 / SMG 266 / 2430) protein is ATP synthase subunit delta.